A 188-amino-acid chain; its full sequence is Elongation factor P (188 aa).

The protein belongs to the elongation factor P family.

The protein resides in the cytoplasm. It functions in the pathway protein biosynthesis; polypeptide chain elongation. Involved in peptide bond synthesis. Stimulates efficient translation and peptide-bond synthesis on native or reconstituted 70S ribosomes in vitro. Probably functions indirectly by altering the affinity of the ribosome for aminoacyl-tRNA, thus increasing their reactivity as acceptors for peptidyl transferase. This Chloroherpeton thalassium (strain ATCC 35110 / GB-78) protein is Elongation factor P.